The primary structure comprises 302 residues: uncharacterized protein (302 aa).

The N-terminal stretch at 1-22 (MLVVFKRLGFIVSIFSLTFLSA) is a signal peptide. Cys-23 carries N-palmitoyl cysteine lipidation. Residue Cys-23 is the site of S-diacylglycerol cysteine attachment.

It belongs to the MG067/MG068/MG395 family.

It is found in the cell membrane. This is an uncharacterized protein from Mycoplasma pneumoniae (strain ATCC 29342 / M129 / Subtype 1) (Mycoplasmoides pneumoniae).